We begin with the raw amino-acid sequence, 388 residues long: Chorismate synthase (388 aa).

Arginine 39 and arginine 45 together coordinate NADP(+). Residues 130-132, 251-252, glycine 296, 311-315, and arginine 337 each bind FMN; these read RSS, NA, and KPIPT.

This sequence belongs to the chorismate synthase family. Homotetramer. FMNH2 is required as a cofactor.

The catalysed reaction is 5-O-(1-carboxyvinyl)-3-phosphoshikimate = chorismate + phosphate. It functions in the pathway metabolic intermediate biosynthesis; chorismate biosynthesis; chorismate from D-erythrose 4-phosphate and phosphoenolpyruvate: step 7/7. Catalyzes the anti-1,4-elimination of the C-3 phosphate and the C-6 proR hydrogen from 5-enolpyruvylshikimate-3-phosphate (EPSP) to yield chorismate, which is the branch point compound that serves as the starting substrate for the three terminal pathways of aromatic amino acid biosynthesis. This reaction introduces a second double bond into the aromatic ring system. This is Chorismate synthase from Streptococcus agalactiae serotype V (strain ATCC BAA-611 / 2603 V/R).